A 244-amino-acid polypeptide reads, in one-letter code: Small ribosomal subunit protein eS4 (244 aa).

Residues 43–106 (LPLLLIVRDT…NENYLVLFDE (64 aa)) enclose the S4 RNA-binding domain.

It belongs to the eukaryotic ribosomal protein eS4 family.

The polypeptide is Small ribosomal subunit protein eS4 (rps4e) (Methanococcus vannielii).